Reading from the N-terminus, the 319-residue chain is MSLNFLDFEQPIAELEAKIDSLTAVSRQDEKLDINIDEEVHRLREKSVELTRKIFADLGAWQVAQLARHPQRPYTLDYVRLAFDEFDELAGDRAYADDKAIVGGIARLEGRPVMVIGHQKGRETKEKIRRNFGMPAPEGYRKALRLMEMAERFNMPIITFIDTPGAYPGVGAEERGQSEAIARNLREMSRLNVPIICTVIGEGGSGGALAIGVGDKVNMLQYSTYSVISPEGCASILWKSADKAPLAAEAMGIIAPRLKELKLIDSIIPEPLGGAHRNPEVMAASLKAQLLEDLADLDVLSTDDLKNRRYQRLMSYGYA.

The 262-residue stretch at 35-296 (NIDEEVHRLR…KAQLLEDLAD (262 aa)) folds into the CoA carboxyltransferase C-terminal domain.

The protein belongs to the AccA family. As to quaternary structure, acetyl-CoA carboxylase is a heterohexamer composed of biotin carboxyl carrier protein (AccB), biotin carboxylase (AccC) and two subunits each of ACCase subunit alpha (AccA) and ACCase subunit beta (AccD).

The protein resides in the cytoplasm. It catalyses the reaction N(6)-carboxybiotinyl-L-lysyl-[protein] + acetyl-CoA = N(6)-biotinyl-L-lysyl-[protein] + malonyl-CoA. Its pathway is lipid metabolism; malonyl-CoA biosynthesis; malonyl-CoA from acetyl-CoA: step 1/1. Its function is as follows. Component of the acetyl coenzyme A carboxylase (ACC) complex. First, biotin carboxylase catalyzes the carboxylation of biotin on its carrier protein (BCCP) and then the CO(2) group is transferred by the carboxyltransferase to acetyl-CoA to form malonyl-CoA. In Salmonella arizonae (strain ATCC BAA-731 / CDC346-86 / RSK2980), this protein is Acetyl-coenzyme A carboxylase carboxyl transferase subunit alpha.